The primary structure comprises 111 residues: Nucleoid-associated protein NMC1380 (111 aa).

It belongs to the YbaB/EbfC family. In terms of assembly, homodimer.

Its subcellular location is the cytoplasm. It is found in the nucleoid. Functionally, binds to DNA and alters its conformation. May be involved in regulation of gene expression, nucleoid organization and DNA protection. In Neisseria meningitidis serogroup C / serotype 2a (strain ATCC 700532 / DSM 15464 / FAM18), this protein is Nucleoid-associated protein NMC1380.